The chain runs to 199 residues: Early activation antigen CD69 (199 aa).

Residues 1 to 29 (MSSENCFVAENSSLHPESGQENDATSPHF) are disordered. Residues 1 to 40 (MSSENCFVAENSSLHPESGQENDATSPHFSTRHEGSFQVP) are Cytoplasmic-facing. Residues 41-61 (VLCAVMNVVFITILIIALIAL) traverse the membrane as a helical; Signal-anchor for type II membrane protein segment. Residues 62–199 (SVGQYNCPGQ…LYWICNKPYK (138 aa)) are Extracellular-facing. Disulfide bonds link Cys-85–Cys-96, Cys-113–Cys-194, and Cys-173–Cys-186. The C-type lectin domain occupies 92-195 (YQRKCYFIST…CEKNLYWICN (104 aa)). A glycan (N-linked (GlcNAc...) asparagine) is linked at Asn-166.

In terms of assembly, homodimer; disulfide-linked. Interacts with S100A8 and S100A9. Interacts with galactin-1/LGALS1. Interacts with S1PR1; this interaction mediates S1PR1 degradation. Post-translationally, constitutive Ser/Thr phosphorylation in both mature thymocytes and activated T-lymphocytes. As to expression, expressed on the surface of activated T-cells, B-cells, natural killer cells, neutrophils, eosinophils, epidermal Langerhans cells and platelets.

The protein localises to the cell membrane. Transmembrane protein expressed mainly on T-cells resident in mucosa that plays an essential role in immune cell homeostasis. Rapidly expressed on the surface of platelets, T-lymphocytes and NK cells upon activation by various stimuli, such as antigen recognition or cytokine signaling, stimulates different signaling pathways in different cell types. Negatively regulates Th17 cell differentiation through its carbohydrate dependent interaction with galectin-1/LGALS1 present on immature dendritic cells. Association of CD69 cytoplasmic tail with the JAK3/STAT5 signaling pathway regulates the transcription of RORgamma/RORC and, consequently, differentiation toward the Th17 lineage. Also acts via the S100A8/S100A9 complex present on peripheral blood mononuclear cells to promote the conversion of naive CD4 T-cells into regulatory T-cells. Acts as an oxidized low-density lipoprotein (oxLDL) receptor in CD4 T-lymphocytes and negatively regulates the inflammatory response by inducing the expression of PDCD1 through the activation of NFAT. Participates in adipose tissue-derived mesenchymal stem cells (ASCs)-mediated protection against P.aeruginosa infection. Mechanistically, specifically recognizes P.aeruginosa to promote ERK1 activation, followed by granulocyte-macrophage colony-stimulating factor (GM-CSF) and other inflammatory cytokines secretion. In eosinophils, induces IL-10 production through the ERK1/2 pathway. Negatively regulates the chemotactic responses of effector lymphocytes and dendritic cells (DCs) to sphingosine 1 phosphate/S1P by acting as a S1PR1 receptor agonist and facilitating the internalization and degradation of the receptor. The chain is Early activation antigen CD69 (CD69) from Homo sapiens (Human).